The chain runs to 412 residues: N-carbamoyl-L-amino-acid amidohydrolase (412 aa).

Positions 82, 93, 128, and 193 each coordinate a divalent metal cation. Positions 196, 229, 278, 291, and 360 each coordinate an N-carbamoyl-L-alpha-amino acid. The interval Ser212 to Pro330 is involved in dimerization. His385 provides a ligand contact to a divalent metal cation.

It belongs to the peptidase M20 family. In terms of assembly, homodimer. It depends on Mn(2+) as a cofactor. The cofactor is Ni(2+). Co(2+) is required as a cofactor. Requires Fe(2+) as cofactor.

The catalysed reaction is an N-carbamoyl-L-alpha-amino acid + H2O + 2 H(+) = an L-alpha-amino acid + NH4(+) + CO2. It carries out the reaction N-carbamoyl-L-tryptophan + H2O + 2 H(+) = L-tryptophan + NH4(+) + CO2. The enzyme catalyses N-carbamoyl-L-tyrosine + H2O + 2 H(+) = L-tyrosine + NH4(+) + CO2. It catalyses the reaction N-carbamoyl-L-phenylalanine + H2O + 2 H(+) = L-phenylalanine + NH4(+) + CO2. Catalyzes the hydrolysis of aliphatic N-carbamoyl-L-alpha-amino acids to free L-alpha-amino acids. Is strictly L-specific since it is inactive toward N-carbamoyl-D-alpha-amino acids. Shows a preference for aromatic N-carbamoyl-L-alpha-amino acids, such as N-carbamoyl-L-tryptophan and N-carbamoyl-L-tyrosine and, to a lesser extent, N-carbamoyl-L-phenylalanine and the non-natural amino acid N-carbamoyl-L-thienylalanine. Carbamoyl derivatives of beta-alanine and charged aliphatic amino acids are not accepted as substrates. This chain is N-carbamoyl-L-amino-acid amidohydrolase, found in Paenarthrobacter aurescens (Arthrobacter aurescens).